A 192-amino-acid chain; its full sequence is Probable thymidylate kinase (192 aa).

7-14 provides a ligand contact to ATP; it reads GIDGAGKS.

It belongs to the thymidylate kinase family.

It catalyses the reaction dTMP + ATP = dTDP + ADP. The sequence is that of Probable thymidylate kinase from Methanobrevibacter smithii (strain ATCC 35061 / DSM 861 / OCM 144 / PS).